We begin with the raw amino-acid sequence, 139 residues long: Glucanase inhibitor protein 3 (139 aa).

In terms of domain architecture, Peptidase S1 spans 1–138 (VLTLEKPSKF…GIEWINSVIK (138 aa)). 2 disulfide bridges follow: cysteine 61-cysteine 73 and cysteine 83-cysteine 114.

This sequence belongs to the peptidase S1 family.

It is found in the secreted. In terms of biological role, secreted effector that suppresses host plant glucan elicitor-mediated defense responses. Targets host endoglucanases and inhibits the endoglucanase-mediated release of elicitor-active glucan oligosaccharides from P.sojae cell walls. This chain is Glucanase inhibitor protein 3, found in Phytophthora sojae (Soybean stem and root rot agent).